We begin with the raw amino-acid sequence, 295 residues long: Polyprenyl transferase dpmaC (295 aa).

8 helical membrane-spanning segments follow: residues Leu39–Ile59, Gln84–Leu104, Val109–Leu124, Lys131–Gly151, Tyr168–Ser188, Leu213–Phe233, Trp237–Phe257, and Ser271–Ala291.

Belongs to the UbiA prenyltransferase family. Mg(2+) serves as cofactor.

The protein localises to the membrane. Its pathway is secondary metabolite biosynthesis; terpenoid biosynthesis. In terms of biological role, polyprenyl transferase; part of the gene cluster that mediates the biosynthesis of the diterpenoid pyrones subglutinols A and B. The first step of the pathway is the synthesis of the alpha-pyrone moiety by the polyketide synthase dpmaA via condensation of one acetyl-CoA starter unit with 3 malonyl-CoA units and 2 methylations. The alpha-pyrone is then combined with geranylgeranyl pyrophosphate (GGPP) formed by the GGPP synthase dpmaD through the action of the prenyltransferase dpmaC to yield a linear alpha-pyrone diterpenoid. Subsequent steps in the diterpenoid pyrone biosynthetic pathway involve the decalin core formation, which is initiated by the epoxidation of the C10-C11 olefin by the FAD-dependent oxidoreductase dpmaE, and is followed by a cyclization cascade catalyzed by the terpene cyclase dpmaB. The dehydrogenase dpmaF is then involved in tetrahydrofuran (THF) ring formation at the C5 unit to complete the formation of subglutinols A and B. The sequence is that of Polyprenyl transferase dpmaC from Metarhizium anisopliae (Entomophthora anisopliae).